We begin with the raw amino-acid sequence, 69 residues long: Toxin Tma3 (69 aa).

The LCN-type CS-alpha/beta domain maps to 2–66 (KDDYPVDTAK…SPTKKSGRCN (65 aa)). Cystine bridges form between C14/C65, C18/C41, C27/C48, and C31/C50.

The protein belongs to the long (4 C-C) scorpion toxin superfamily. Sodium channel inhibitor family. Expressed by the venom gland.

It is found in the secreted. In terms of biological role, inhibits voltage-gated sodium channels (Nav). This toxin shows insect lethality against crickets. The sequence is that of Toxin Tma3 from Tityus macrochirus (Scorpion).